A 229-amino-acid polypeptide reads, in one-letter code: MNGEFGMRPRAIVLLSGGLDSTTCLAWAQARYECMALSFMYGQRSTTELDAAKAIAQNAGVEHRVINIDLANLGGSALTDHNIDVPEQLQEGIPVTYVPARNTIFLSYALAAAEVFGAEAIVIGVNAVDYSGYPDCRPEYIQAFTNMARLATKAGVEGKPLTFETPLLHLSKANIIRLGIEHGVDYSQTVSCYQADAQGRACGKCDSCRLRKQGFIEAGVTDPTRYIPQ.

Residue 15 to 25 (LSGGLDSTTCL) participates in ATP binding. Residues Cys192, Cys202, Cys205, and Cys208 each contribute to the Zn(2+) site.

Belongs to the QueC family. The cofactor is Zn(2+).

The enzyme catalyses 7-carboxy-7-deazaguanine + NH4(+) + ATP = 7-cyano-7-deazaguanine + ADP + phosphate + H2O + H(+). Its pathway is purine metabolism; 7-cyano-7-deazaguanine biosynthesis. Catalyzes the ATP-dependent conversion of 7-carboxy-7-deazaguanine (CDG) to 7-cyano-7-deazaguanine (preQ(0)). This chain is 7-cyano-7-deazaguanine synthase, found in Acinetobacter baylyi (strain ATCC 33305 / BD413 / ADP1).